We begin with the raw amino-acid sequence, 519 residues long: Probable U3 small nucleolar RNA-associated protein 18 (519 aa).

WD repeat units lie at residues Asp26 to Thr66, Gly71 to Ile111, Ser216 to Val254, Leu259 to Val298, Asn306 to Ser345, Lys347 to Arg386, Gln390 to Ala429, Asn438 to Asn479, and Thr485 to Asp519.

This sequence belongs to the WD repeat UTP18 family. In terms of assembly, component of the ribosomal small subunit (SSU) processome.

The protein localises to the nucleus. It localises to the nucleolus. Functionally, involved in nucleolar processing of pre-18S ribosomal RNA. The sequence is that of Probable U3 small nucleolar RNA-associated protein 18 from Schizosaccharomyces pombe (strain 972 / ATCC 24843) (Fission yeast).